Reading from the N-terminus, the 919-residue chain is Phosphoenolpyruvate carboxylase (919 aa).

Residues His-138 and Lys-579 contribute to the active site.

It belongs to the PEPCase type 1 family. It depends on Mg(2+) as a cofactor.

It catalyses the reaction oxaloacetate + phosphate = phosphoenolpyruvate + hydrogencarbonate. With respect to regulation, activity not stimulated by acetyl-CoA in the absence of any allosteric inhibitor, while the corresponding protein from E.coli is strongly stimulated. In terms of biological role, forms oxaloacetate, a four-carbon dicarboxylic acid source for the tricarboxylic acid cycle. This Corynebacterium glutamicum (strain ATCC 13032 / DSM 20300 / JCM 1318 / BCRC 11384 / CCUG 27702 / LMG 3730 / NBRC 12168 / NCIMB 10025 / NRRL B-2784 / 534) protein is Phosphoenolpyruvate carboxylase (ppc).